A 405-amino-acid chain; its full sequence is Imidazolonepropionase (405 aa).

The Fe(3+) site is built by His73 and His75. The Zn(2+) site is built by His73 and His75. Positions 82, 145, and 178 each coordinate 4-imidazolone-5-propanoate. An N-formimidoyl-L-glutamate-binding site is contributed by Tyr145. His243 contacts Fe(3+). A Zn(2+)-binding site is contributed by His243. Gln246 lines the 4-imidazolone-5-propanoate pocket. Fe(3+) is bound at residue Asp318. Residue Asp318 coordinates Zn(2+). Residues Asn320 and Gly322 each contribute to the N-formimidoyl-L-glutamate site. Position 323 (Thr323) interacts with 4-imidazolone-5-propanoate.

This sequence belongs to the metallo-dependent hydrolases superfamily. HutI family. Zn(2+) is required as a cofactor. Requires Fe(3+) as cofactor.

Its subcellular location is the cytoplasm. The catalysed reaction is 4-imidazolone-5-propanoate + H2O = N-formimidoyl-L-glutamate. Its pathway is amino-acid degradation; L-histidine degradation into L-glutamate; N-formimidoyl-L-glutamate from L-histidine: step 3/3. Its function is as follows. Catalyzes the hydrolytic cleavage of the carbon-nitrogen bond in imidazolone-5-propanoate to yield N-formimidoyl-L-glutamate. It is the third step in the universal histidine degradation pathway. The polypeptide is Imidazolonepropionase (Brucella anthropi (strain ATCC 49188 / DSM 6882 / CCUG 24695 / JCM 21032 / LMG 3331 / NBRC 15819 / NCTC 12168 / Alc 37) (Ochrobactrum anthropi)).